A 454-amino-acid polypeptide reads, in one-letter code: UPF0210 protein Mhun_2657 (454 aa).

The protein belongs to the UPF0210 family.

In Methanospirillum hungatei JF-1 (strain ATCC 27890 / DSM 864 / NBRC 100397 / JF-1), this protein is UPF0210 protein Mhun_2657.